The primary structure comprises 434 residues: GTPase Obg (434 aa).

Positions 1–159 (MQFIDRCQIK…KTVRLELKYL (159 aa)) constitute an Obg domain. The OBG-type G domain maps to 160–329 (ANVGIVGYPN…LVDRVFDLYQ (170 aa)). GTP is bound by residues 166–173 (GYPNAGKS), 191–195 (FTTLV), 212–215 (DIPG), 282–285 (NKMD), and 310–312 (ISA). Mg(2+) is bound by residues Ser-173 and Thr-193. The region spanning 356–434 (EKTIDDDPLD…ICDYEYLIDE (79 aa)) is the OCT domain.

It belongs to the TRAFAC class OBG-HflX-like GTPase superfamily. OBG GTPase family. As to quaternary structure, monomer. Mg(2+) serves as cofactor.

Its subcellular location is the cytoplasm. In terms of biological role, an essential GTPase which binds GTP, GDP and possibly (p)ppGpp with moderate affinity, with high nucleotide exchange rates and a fairly low GTP hydrolysis rate. Plays a role in control of the cell cycle, stress response, ribosome biogenesis and in those bacteria that undergo differentiation, in morphogenesis control. The protein is GTPase Obg of Mycoplasmoides gallisepticum (strain R(low / passage 15 / clone 2)) (Mycoplasma gallisepticum).